The following is a 276-amino-acid chain: Diaminopimelate epimerase (276 aa).

The substrate site is built by N13, Q46, and N66. C75 acts as the Proton donor in catalysis. Residues 76–77 (GN), N159, N192, and 210–211 (ER) contribute to the substrate site. The Proton acceptor role is filled by C219. Residue 220–221 (GT) coordinates substrate.

Belongs to the diaminopimelate epimerase family. In terms of assembly, homodimer.

Its subcellular location is the cytoplasm. The catalysed reaction is (2S,6S)-2,6-diaminopimelate = meso-2,6-diaminopimelate. The protein operates within amino-acid biosynthesis; L-lysine biosynthesis via DAP pathway; DL-2,6-diaminopimelate from LL-2,6-diaminopimelate: step 1/1. Catalyzes the stereoinversion of LL-2,6-diaminopimelate (L,L-DAP) to meso-diaminopimelate (meso-DAP), a precursor of L-lysine and an essential component of the bacterial peptidoglycan. In Chromobacterium violaceum (strain ATCC 12472 / DSM 30191 / JCM 1249 / CCUG 213 / NBRC 12614 / NCIMB 9131 / NCTC 9757 / MK), this protein is Diaminopimelate epimerase.